Consider the following 228-residue polypeptide: PKHD-type hydroxylase Rmet_3078 (228 aa).

The Fe2OG dioxygenase domain occupies isoleucine 80 to serine 180. Fe cation-binding residues include histidine 98, aspartate 100, and histidine 161. Arginine 171 contacts 2-oxoglutarate.

The cofactor is Fe(2+). L-ascorbate is required as a cofactor.

This chain is PKHD-type hydroxylase Rmet_3078, found in Cupriavidus metallidurans (strain ATCC 43123 / DSM 2839 / NBRC 102507 / CH34) (Ralstonia metallidurans).